The primary structure comprises 224 residues: Methylamine utilization ferredoxin-type protein MauM (224 aa).

Residues 1–41 (MEARMTGRRKVTRRDAMADAARAVGVACLGGFSLAALVRTA) form the signal peptide. 4 consecutive 4Fe-4S ferredoxin-type domains span residues 54 to 84 (ALPE…LAEW), 91 to 124 (GTPF…RDIP), 133 to 169 (VAVL…LEPQ), and 177 to 208 (MIPV…VLPR). [4Fe-4S] cluster contacts are provided by C64, C67, C70, C74, C102, C105, C110, C114, C142, C150, C153, C157, C186, C189, C192, and C196.

It functions in the pathway one-carbon metabolism; methylamine degradation. In terms of biological role, involved in electron transfer. The polypeptide is Methylamine utilization ferredoxin-type protein MauM (mauM) (Paracoccus denitrificans (strain Pd 1222)).